Reading from the N-terminus, the 607-residue chain is Karyogamy meiotic segregation protein 1 (607 aa).

The tract at residues 83-135 is disordered; sequence DDSFANQAEKPSMEQQNSKNSIKEDANEHSVNSAHSKSSSNASPESLNPSQMM. Positions 111 to 132 are enriched in low complexity; the sequence is HSVNSAHSKSSSNASPESLNPS.

Interacts with mcp1 and sad1.

Its subcellular location is the cytoplasm. The protein localises to the cytoskeleton. It localises to the microtubule organizing center. The protein resides in the spindle pole body. In terms of biological role, has a role in karyogamy, recombination and segregation during meiosis. Although it has been shown to associate with the spindle pole body it is unlikely to be involved in its formation or maintenance. The sequence is that of Karyogamy meiotic segregation protein 1 (kms1) from Schizosaccharomyces pombe (strain 972 / ATCC 24843) (Fission yeast).